The chain runs to 127 residues: UPF0251 protein Ccel_0627 (127 aa).

This sequence belongs to the UPF0251 family.

In Ruminiclostridium cellulolyticum (strain ATCC 35319 / DSM 5812 / JCM 6584 / H10) (Clostridium cellulolyticum), this protein is UPF0251 protein Ccel_0627.